The primary structure comprises 165 residues: Neurotrophin-3 (165 aa).

Positions Ile-1–Ser-3 are cleaved as a signal peptide. A propeptide spanning residues Thr-4 to Arg-119 is cleaved from the precursor. N-linked (GlcNAc...) asparagine glycosylation occurs at Asn-112.

It belongs to the NGF-beta family.

It localises to the secreted. Functionally, seems to promote the survival of visceral and proprioceptive sensory neurons. The sequence is that of Neurotrophin-3 (NTF3) from Calabaria reinhardtii (Calabar boa).